A 384-amino-acid polypeptide reads, in one-letter code: Opsin-3 (384 aa).

The Extracellular portion of the chain corresponds to 1–62; the sequence is MATNFTQELY…VSKYWHYVLA (62 aa). The N-linked (GlcNAc...) asparagine glycan is linked to asparagine 4. A helical transmembrane segment spans residues 63 to 83; sequence LIYTMLMVTSLTGNGIVIWIF. Topologically, residues 84-94 are cytoplasmic; the sequence is STSKSLRSASN. A helical transmembrane segment spans residues 95 to 115; that stretch reads MFVINLAVFDLMMMLEMPLLI. Over 116–132 the chain is Extracellular; it reads MNSFYQRLVGYQLGCDV. A disulfide bridge links cysteine 130 with cysteine 207. A helical transmembrane segment spans residues 133–153; it reads YAVLGSLSGIGGAITNAVIAF. The Cytoplasmic segment spans residues 154–171; it reads DRYKTISSPLDGRINTVQ. Residues 172–192 traverse the membrane as a helical segment; the sequence is AGLLIAFTWFWALPFTILPAF. The Extracellular segment spans residues 193 to 219; that stretch reads RIWGRFVPEGFLTTCSFDYFTEDQDTE. A helical membrane pass occupies residues 220–240; sequence VFVACIFVWSYCIPMALICYF. Residues 241-284 are Cytoplasmic-facing; that stretch reads YSQLFGAVRLHERMLQEQAKKMNVKSLASNKEDNSRSVEIRIAK. The chain crosses the membrane as a helical span at residues 285 to 305; sequence VAFTIFFLFICAWTPYAFVTM. Over 306-312 the chain is Extracellular; the sequence is TGAFGDR. The chain crosses the membrane as a helical span at residues 313-333; the sequence is TLLTPIATMIPAVCCKVVSCI. At 334-384 the chain is on the cytoplasmic side; sequence DPWVYAINHPRYRAELQKRLPWMGVREQDPDAVSTTTSVATAGFQPPAAEA.

This sequence belongs to the G-protein coupled receptor 1 family. Opsin subfamily. As to expression, in the retina, expression is essentially uniformly distributed but a higher level is seen in the ventral region where the B-cells are localized.

It localises to the membrane. Visual pigments are the light-absorbing molecules that mediate vision. They consist of an apoprotein, opsin, covalently linked to cis-retinal. May play a role in photoperiodic photoreception. The polypeptide is Opsin-3 (OP3) (Manduca sexta (Tobacco hawkmoth)).